Consider the following 155-residue polypeptide: 2-C-methyl-D-erythritol 2,4-cyclodiphosphate synthase (155 aa).

Residues Asp8 and His10 each contribute to the a divalent metal cation site. 4-CDP-2-C-methyl-D-erythritol 2-phosphate contacts are provided by residues Asp8–His10 and His34–Ser35. A divalent metal cation is bound at residue His42. 4-CDP-2-C-methyl-D-erythritol 2-phosphate-binding positions include Asp56 to Gly58, Phe61 to Asp65, Ala100 to Ala106, Thr132 to Glu135, Phe139, and Arg142.

This sequence belongs to the IspF family. Homotrimer. Requires a divalent metal cation as cofactor.

It carries out the reaction 4-CDP-2-C-methyl-D-erythritol 2-phosphate = 2-C-methyl-D-erythritol 2,4-cyclic diphosphate + CMP. It participates in isoprenoid biosynthesis; isopentenyl diphosphate biosynthesis via DXP pathway; isopentenyl diphosphate from 1-deoxy-D-xylulose 5-phosphate: step 4/6. Its function is as follows. Involved in the biosynthesis of isopentenyl diphosphate (IPP) and dimethylallyl diphosphate (DMAPP), two major building blocks of isoprenoid compounds. Catalyzes the conversion of 4-diphosphocytidyl-2-C-methyl-D-erythritol 2-phosphate (CDP-ME2P) to 2-C-methyl-D-erythritol 2,4-cyclodiphosphate (ME-CPP) with a corresponding release of cytidine 5-monophosphate (CMP). This Saccharophagus degradans (strain 2-40 / ATCC 43961 / DSM 17024) protein is 2-C-methyl-D-erythritol 2,4-cyclodiphosphate synthase.